The sequence spans 165 residues: Crossover junction endodeoxyribonuclease RuvC (165 aa).

Catalysis depends on residues aspartate 7, glutamate 67, and aspartate 140. Mg(2+) is bound by residues aspartate 7, glutamate 67, and aspartate 140.

This sequence belongs to the RuvC family. In terms of assembly, homodimer which binds Holliday junction (HJ) DNA. The HJ becomes 2-fold symmetrical on binding to RuvC with unstacked arms; it has a different conformation from HJ DNA in complex with RuvA. In the full resolvosome a probable DNA-RuvA(4)-RuvB(12)-RuvC(2) complex forms which resolves the HJ. Mg(2+) is required as a cofactor.

It localises to the cytoplasm. It catalyses the reaction Endonucleolytic cleavage at a junction such as a reciprocal single-stranded crossover between two homologous DNA duplexes (Holliday junction).. In terms of biological role, the RuvA-RuvB-RuvC complex processes Holliday junction (HJ) DNA during genetic recombination and DNA repair. Endonuclease that resolves HJ intermediates. Cleaves cruciform DNA by making single-stranded nicks across the HJ at symmetrical positions within the homologous arms, yielding a 5'-phosphate and a 3'-hydroxyl group; requires a central core of homology in the junction. The consensus cleavage sequence is 5'-(A/T)TT(C/G)-3'. Cleavage occurs on the 3'-side of the TT dinucleotide at the point of strand exchange. HJ branch migration catalyzed by RuvA-RuvB allows RuvC to scan DNA until it finds its consensus sequence, where it cleaves and resolves the cruciform DNA. The chain is Crossover junction endodeoxyribonuclease RuvC from Caldanaerobacter subterraneus subsp. tengcongensis (strain DSM 15242 / JCM 11007 / NBRC 100824 / MB4) (Thermoanaerobacter tengcongensis).